A 34-amino-acid chain; its full sequence is Leader peptide SpeFL (34 aa).

A sensor domain region spans residues 1–13 (MENNSRTMPHIRR). The Ornithine recognition loop signature appears at 10-16 (HIRRTTH). R13 lines the L-ornithine pocket. An effector domain region spans residues 14-34 (TTHIMKFAHRNSFDFHFFNAR).

Belongs to the speF operon leader peptide family. Binds ornithine in stalled 70S ribosomes, blocking the upper two-thirds of the exit tunnel. Contacts 23S rRNA and ribosomal proteins L4 and L22.

Functionally, a small protein (arrest peptide) encoded upstream of inducible ornithine carboxylase gene (speF) that controls expression of downstream genes (speF and patE) by nascent chain-translational arrest and transcriptional attenuation. In the presence of ornithine a toeprint due to ribosomal arrest can be seen on the speFL transcript. Only L-ornithine (not other tested amino acids) has this effect. It is thought that in the presence of ornithine, ribosomal stalling on speFL prevents binding of Rho transcription termination factor to a downstream rut site allowing transcription of the operon. In the absence of ornithine, ribosomes terminate translation and are recycled, exposing the rut site allowing Rho to bind and prematurely terminate transcription. The presence of a pair of rare Arg codons could slow down translation to prevent polysome accumulation and to expose the rut site to Rho. In Escherichia coli (strain K12), this protein is Leader peptide SpeFL.